Here is a 96-residue protein sequence, read N- to C-terminus: UPF0235 protein Acid345_4205 (96 aa).

This sequence belongs to the UPF0235 family.

This is UPF0235 protein Acid345_4205 from Koribacter versatilis (strain Ellin345).